The chain runs to 58 residues: U-scoloptoxin(14)-Sa1a (58 aa).

The N-terminal stretch at 1–18 (MNRILGMIFLFCLISCYA) is a signal peptide.

Belongs to the scoloptoxin-14 family. In terms of processing, contains 4 disulfide bonds. As to expression, expressed by the venom gland.

Its subcellular location is the secreted. The sequence is that of U-scoloptoxin(14)-Sa1a from Scolopendra alternans (Florida Keys giant centipede).